We begin with the raw amino-acid sequence, 343 residues long: Pseudaminic acid synthase (343 aa).

The region spanning 287-343 (SLYASKDIKKGEMFSEENVKSVRPSFGLHPKFYQELLGKKASKDIKFGDALKQGDFQ) is the AFP-like domain.

Belongs to the pseudaminic acid synthase family. Requires a divalent metal cation as cofactor.

The enzyme catalyses 2,4-diacetamido-2,4,6-trideoxy-beta-L-altrose + phosphoenolpyruvate + H2O = pseudaminate + phosphate. Functionally, catalyzes the fifth step in the biosynthesis of pseudaminic acid, a sialic-acid-like sugar that is used to modify flagellin. Catalyzes the condensation of phosphoenolpyruvate with 2,4-diacetamido-2,4,6-trideoxy-beta-l-altropyranose, forming pseudaminic acid. This chain is Pseudaminic acid synthase (pseI), found in Campylobacter jejuni subsp. jejuni serotype O:2 (strain ATCC 700819 / NCTC 11168).